We begin with the raw amino-acid sequence, 108 residues long: DIQMTQSPDYLSASVGETVTITCRASENIYSYLAWYQQKQGKSPQLLVYDAKTLVEGVPSRFSGSGSGTQFSLKINSLQPEDFGSYYCQHHYGIPFTFGSGTKLEIKR.

The segment at 1 to 23 (DIQMTQSPDYLSASVGETVTITC) is framework-1. C23 and C88 are oxidised to a cystine. Positions 24 to 34 (RASENIYSYLA) are complementarity-determining-1. Residues 35–49 (WYQQKQGKSPQLLVY) form a framework-2 region. Positions 50-56 (DAKTLVE) are complementarity-determining-2. Positions 57 to 88 (GVPSRFSGSGSGTQFSLKINSLQPEDFGSYYC) are framework-3. Residues 89–97 (QHHYGIPFT) form a complementarity-determining-3 region. Positions 98–108 (FGSGTKLEIKR) are framework-4.

This is Ig kappa chain V-V region MOPC 149 from Mus musculus (Mouse).